The chain runs to 172 residues: Protein 3 (172 aa).

The sequence is that of Protein 3 (3) from Northern cereal mosaic virus (NCMV).